The chain runs to 481 residues: ATP synthase subunit beta (481 aa).

167–174 (GGAGVGKT) serves as a coordination point for ATP.

Belongs to the ATPase alpha/beta chains family. In terms of assembly, F-type ATPases have 2 components, CF(1) - the catalytic core - and CF(0) - the membrane proton channel. CF(1) has five subunits: alpha(3), beta(3), gamma(1), delta(1), epsilon(1). CF(0) has three main subunits: a(1), b(2) and c(9-12). The alpha and beta chains form an alternating ring which encloses part of the gamma chain. CF(1) is attached to CF(0) by a central stalk formed by the gamma and epsilon chains, while a peripheral stalk is formed by the delta and b chains.

Its subcellular location is the cell membrane. It carries out the reaction ATP + H2O + 4 H(+)(in) = ADP + phosphate + 5 H(+)(out). In terms of biological role, produces ATP from ADP in the presence of a proton gradient across the membrane. The catalytic sites are hosted primarily by the beta subunits. The sequence is that of ATP synthase subunit beta from Corynebacterium diphtheriae (strain ATCC 700971 / NCTC 13129 / Biotype gravis).